Reading from the N-terminus, the 496-residue chain is Galactokinase (496 aa).

Position 2 is an N-acetylalanine (Ala2). Residues Arg56, Glu62, His63, and Asp65 each contribute to the alpha-D-galactose site. 4 residues coordinate ATP: Gly161, Gly163, Ser165, and Ser166. Alpha-D-galactose is bound at residue Asp210. Asp210 acts as the Proton acceptor in catalysis. Ser252, Gln253, and Lys254 together coordinate ATP. An alpha-D-galactose-binding site is contributed by Tyr262.

The protein belongs to the GHMP kinase family. GalK subfamily. Mg(2+) serves as cofactor. It depends on Mn(2+) as a cofactor. Requires Ca(2+) as cofactor. In terms of tissue distribution, expressed in roots, stems, leaves, flowers and young siliques. Higher expression in the elongating middle stem region than in the lower or upper stem region.

It catalyses the reaction alpha-D-galactose + ATP = alpha-D-galactose 1-phosphate + ADP + H(+). Its pathway is carbohydrate metabolism; galactose metabolism. Functionally, sugar-1-kinase with a very high substrate specificity for the alpha-anomeric configuration of D-galacose (D-Gal). Also efficiently converts 2-deoxy-D-Gal to 2-deoxy-D-al-1-phosphate. This is Galactokinase (GAL1) from Arabidopsis thaliana (Mouse-ear cress).